We begin with the raw amino-acid sequence, 317 residues long: MKLSEIALKVDATFSGEDLEIFALNSLKNANKAELTYCDGEKNAKFISTSNAGAILVTKSLLDLVPAGMVALVCDNPHLAFAILSKIYAKPLFCEPKPSNIAQSATIMPNVYIGSNVSVGENTIVMAGAFLGDNVTIGKNCIIHPNVVIYNDCVIGNECHLLANCVIGSDGFGYAHTKTGEHVKIYHNGNVVLGDFVEIGACTTIDRGVFESTMIANYTKIDNLVQIGHNCELGNGCLIVSQTGLAGSTVLGRNVVMGGQSGSAGHVKVGDFAQIAARGGVSKDLPGGKKYAGAYPIMELSEQFKFQAKILRFFKKN.

Residue His229 is the Proton acceptor of the active site.

The protein belongs to the transferase hexapeptide repeat family. LpxD subfamily. In terms of assembly, homotrimer.

The enzyme catalyses a UDP-3-O-[(3R)-3-hydroxyacyl]-alpha-D-glucosamine + a (3R)-hydroxyacyl-[ACP] = a UDP-2-N,3-O-bis[(3R)-3-hydroxyacyl]-alpha-D-glucosamine + holo-[ACP] + H(+). Its pathway is bacterial outer membrane biogenesis; LPS lipid A biosynthesis. In terms of biological role, catalyzes the N-acylation of UDP-3-O-acylglucosamine using 3-hydroxyacyl-ACP as the acyl donor. Is involved in the biosynthesis of lipid A, a phosphorylated glycolipid that anchors the lipopolysaccharide to the outer membrane of the cell. In Campylobacter concisus (strain 13826), this protein is UDP-3-O-acylglucosamine N-acyltransferase.